The sequence spans 180 residues: Negative modulator of initiation of replication (180 aa).

The segment at 87 to 88 is interaction with DNA; that stretch reads AV.

This sequence belongs to the SeqA family. In terms of assembly, homodimer. Polymerizes to form helical filaments.

It localises to the cytoplasm. In terms of biological role, negative regulator of replication initiation, which contributes to regulation of DNA replication and ensures that replication initiation occurs exactly once per chromosome per cell cycle. Binds to pairs of hemimethylated GATC sequences in the oriC region, thus preventing assembly of replication proteins and re-initiation at newly replicated origins. Repression is relieved when the region becomes fully methylated. This chain is Negative modulator of initiation of replication, found in Ferrimonas balearica (strain DSM 9799 / CCM 4581 / KCTC 23876 / PAT).